Consider the following 131-residue polypeptide: MAIQRTDRLNSLLKEVISEVIRRDVRNPYVTELVTVTRVQISRDLRYAKVFISIIGSEQAKVETIEALNSAAGFIAVNASQKVVMRYFPELNFKLDDSVDKHMRIEELLGKITKERESRQGDNSDQLEQEP.

Belongs to the RbfA family. In terms of assembly, monomer. Binds 30S ribosomal subunits, but not 50S ribosomal subunits or 70S ribosomes.

The protein localises to the cytoplasm. Functionally, one of several proteins that assist in the late maturation steps of the functional core of the 30S ribosomal subunit. Associates with free 30S ribosomal subunits (but not with 30S subunits that are part of 70S ribosomes or polysomes). Required for efficient processing of 16S rRNA. May interact with the 5'-terminal helix region of 16S rRNA. The protein is Ribosome-binding factor A of Protochlamydia amoebophila (strain UWE25).